Reading from the N-terminus, the 57-residue chain is UPF0391 membrane protein RB0084 (57 aa).

The next 2 helical transmembrane spans lie at W4–S24 and I33–G53.

Belongs to the UPF0391 family.

The protein resides in the cell membrane. The sequence is that of UPF0391 membrane protein RB0084 from Rhizobium meliloti (strain 1021) (Ensifer meliloti).